Reading from the N-terminus, the 468-residue chain is Secreted triacylglycerol lipase LIP7 (468 aa).

A signal peptide spans M1–G21. C125 and C295 are oxidised to a cystine. S209 functions as the Nucleophile in the catalytic mechanism. Catalysis depends on residues D355 and H389.

Belongs to the AB hydrolase superfamily. Lipase family. Class Lip subfamily.

It localises to the secreted. It is found in the cell wall. The catalysed reaction is a triacylglycerol + H2O = a diacylglycerol + a fatty acid + H(+). It carries out the reaction a monoacylglycerol + H2O = glycerol + a fatty acid + H(+). It catalyses the reaction a diacylglycerol + H2O = a monoacylglycerol + a fatty acid + H(+). In terms of biological role, secreted lipase involved in Dandruff and seborrheic dermatitis (D/SD) probably via lipase-mediated breakdown of sebaceous lipids and release of irritating free fatty acids. Has triacylglycerol lipase activity and is able to hydrolyze triolein. Mostly converts monoolein to di- and triolein, while free fatty acids are only produced in low amounts. This Malassezia globosa (strain ATCC MYA-4612 / CBS 7966) (Dandruff-associated fungus) protein is Secreted triacylglycerol lipase LIP7.